The following is a 221-amino-acid chain: Protein N-terminal glutamine amidohydrolase (221 aa).

S2 carries the N-acetylserine modification. Residues C23, H79, and D97 contribute to the active site.

It belongs to the NTAQ1 family. In terms of assembly, monomer.

It carries out the reaction N-terminal L-glutaminyl-[protein] + H2O = N-terminal L-glutamyl-[protein] + NH4(+). Mediates the side-chain deamidation of N-terminal glutamine residues to glutamate, an important step in N-end rule pathway of protein degradation. Conversion of the resulting N-terminal glutamine to glutamate renders the protein susceptible to arginylation, polyubiquitination and degradation as specified by the N-end rule. Does not act on substrates with internal or C-terminal glutamine and does not act on non-glutamine residues in any position. Involved in immune response. Controls the expression of specific defense-response genes, activates the synthesis pathway for the phytoalexin camalexin, and influences basal resistance to the hemibiotroph pathogen Pseudomonas syringae pv tomato (Pst). This is Protein N-terminal glutamine amidohydrolase from Arabidopsis thaliana (Mouse-ear cress).